A 55-amino-acid chain; its full sequence is Large ribosomal subunit protein bL32 (55 aa).

The span at 1–19 (MAVPKRRMSRANTHSRRSQ) shows a compositional bias: basic residues. The tract at residues 1-20 (MAVPKRRMSRANTHSRRSQW) is disordered.

This sequence belongs to the bacterial ribosomal protein bL32 family.

The polypeptide is Large ribosomal subunit protein bL32 (Corynebacterium jeikeium (strain K411)).